Reading from the N-terminus, the 115-residue chain is Flagellar transcriptional regulator FlhD (115 aa).

Belongs to the FlhD family. In terms of assembly, homodimer; disulfide-linked. Forms a heterohexamer composed of two FlhC and four FlhD subunits. Each FlhC binds a FlhD dimer, forming a heterotrimer, and a hexamer assembles by dimerization of two heterotrimers.

It localises to the cytoplasm. Functions in complex with FlhC as a master transcriptional regulator that regulates transcription of several flagellar and non-flagellar operons by binding to their promoter region. Activates expression of class 2 flagellar genes, including fliA, which is a flagellum-specific sigma factor that turns on the class 3 genes. Also regulates genes whose products function in a variety of physiological pathways. The sequence is that of Flagellar transcriptional regulator FlhD from Edwardsiella ictaluri (strain 93-146).